Here is an 876-residue protein sequence, read N- to C-terminus: Monofunctional isopimaradiene synthase, chloroplastic (876 aa).

The N-terminal 64 residues, 1–64, are a transit peptide targeting the chloroplast; that stretch reads MAMPSYSSLS…YLRLGSRKII (64 aa). Mg(2+) is bound by residues D628, D632, N772, T776, and E780. Residues 628-632 carry the DDXXD motif motif; the sequence is DDLYD.

Belongs to the terpene synthase family. Tpsd subfamily. Requires Mg(2+) as cofactor.

The protein localises to the plastid. It localises to the chloroplast. It catalyses the reaction (+)-copalyl diphosphate = isopimara-7,15-diene + diphosphate. It functions in the pathway terpene metabolism; oleoresin biosynthesis. In terms of biological role, involved in defensive oleoresin formation in conifers in response to insect attack or other injury. Involved in diterpene (C20) olefins biosynthesis. Monofunctional enzyme lacking the DXDD motif in the class II active site relevant for the cyclization of geranylgeranyl diphosphate (GGPP). Requires (+)-copalyl diphosphate ((+)-CPP) as substrate, but no activity with GGPP or ent-CPP. Isopimaradiene is the major products of the enzyme followed by sandaracopimaradiene. In Pinus contorta (Shore pine), this protein is Monofunctional isopimaradiene synthase, chloroplastic.